We begin with the raw amino-acid sequence, 249 residues long: Uroplakin-3b-like protein 1 (249 aa).

Positions 1–26 (MGPHGKQSVLRMPLLLLLTCVQSGTG) are cleaved as a signal peptide. Residues 27–194 (LESINYAPQL…PGSQGKGTVV (168 aa)) are Extracellular-facing. Asn-63, Asn-82, and Asn-133 each carry an N-linked (GlcNAc...) asparagine glycan. The chain crosses the membrane as a helical span at residues 195–215 (IIAFLSILLAILLVVFLVLVI). At 216 to 249 (SACLSTSGSSPEEQVRMRHYHTHHMGSLRAERSS) the chain is on the cytoplasmic side.

Belongs to the uroplakin-3 family.

It localises to the membrane. This is Uroplakin-3b-like protein 1 from Mus musculus (Mouse).